A 146-amino-acid chain; its full sequence is MNPAHLLVLSAVCVSLLGASNIPPQSLNLLQFKDMIRCTIPCERTWGEYADYGCYCGAGGSGRPIDALDRCCYVHDNCYGDAEKRNCNPKVVSYSSKCDKRTLFCYDAPGSCARFVCDCDRTAALCFGDSEYIGRHKNIDTKRYCQ.

A signal peptide spans 1–19 (MNPAHLLVLSAVCVSLLGA). Positions 20 to 27 (SNIPPQSL) are excised as a propeptide. 6 disulfides stabilise this stretch: cysteine 54/cysteine 145, cysteine 56/cysteine 72, cysteine 71/cysteine 126, cysteine 78/cysteine 119, cysteine 87/cysteine 112, and cysteine 105/cysteine 117. Ca(2+) contacts are provided by tyrosine 55, glycine 57, and glycine 59. Residue histidine 75 is part of the active site. Position 76 (aspartate 76) interacts with Ca(2+). The active site involves aspartate 120.

It belongs to the phospholipase A2 family. Group I subfamily. D49 sub-subfamily. In terms of assembly, heterodimer; disulfide-linked. The A chain has phospholipase A2 activity and the B chain shows homology with the basic protease inhibitors. Requires Ca(2+) as cofactor. Expressed by the venom gland.

The protein resides in the secreted. It carries out the reaction a 1,2-diacyl-sn-glycero-3-phosphocholine + H2O = a 1-acyl-sn-glycero-3-phosphocholine + a fatty acid + H(+). Its function is as follows. Snake venom phospholipase A2 (PLA2) that inhibits neuromuscular transmission by blocking acetylcholine release from the nerve termini. PLA2 catalyzes the calcium-dependent hydrolysis of the 2-acyl groups in 3-sn-phosphoglycerides. This chain is Basic phospholipase A2 beta-bungarotoxin A2 chain, found in Bungarus flaviceps flaviceps (Red-headed krait).